A 233-amino-acid chain; its full sequence is Histidinol dehydrogenase (233 aa).

S31, Q53, and H56 together coordinate substrate. Zn(2+) is bound by residues Q53 and H56. Catalysis depends on proton acceptor residues E121 and H122. Residues H122, D155, E209, and H214 each coordinate substrate. Position 155 (D155) interacts with Zn(2+). H214 lines the Zn(2+) pocket.

This sequence belongs to the histidinol dehydrogenase family. Zn(2+) is required as a cofactor.

The enzyme catalyses L-histidinol + 2 NAD(+) + H2O = L-histidine + 2 NADH + 3 H(+). The protein operates within amino-acid biosynthesis; L-histidine biosynthesis; L-histidine from 5-phospho-alpha-D-ribose 1-diphosphate: step 9/9. In terms of biological role, catalyzes the sequential NAD-dependent oxidations of L-histidinol to L-histidinaldehyde and then to L-histidine. The polypeptide is Histidinol dehydrogenase (hisD) (Thiocapsa roseopersicina).